Reading from the N-terminus, the 385-residue chain is MDEIINKYQAVEKLFKEIQEGLAAYDQYKTLISELLHYNNHIKQEYFNFLMIISPYLIRAHSGETLRNKVNNEIKRLILVENINTKISKTLVSVNFLLQKKLSVDGVKTKNMWCTNNPMLQVKTAHNLFKQLCDTQSKTQWVQTLKYKECKYCHTDMVFNTTQFGLQCPNCGCIQELMGTIFDETHFYNHDGQKAKSGIFNPNRHYRFWIEHILGRNSEQELGTKQDPCGTKVLQQLKKIIKRDNKCIALLTVENIRKMLKEINRTDLNNCVSLILRKLTGVGPPQISESILLRGEYIFTEAIKIREKVCKKGRINRNYYPYYIYKIFDAILPPNDTTNRRILQYIHLQGNDTLANNDSEWESICMELPEIKWKPTDRTHCVHFF.

2 consecutive C2H2-type zinc fingers follow at residues 166-190 (LQCPNCGCIQELMGTIFDETHFYNH) and 168-190 (CPNCGCIQELMGTIFDETHFYNH).

Belongs to the asfivirus B385R family.

The chain is Zinc finger protein B385R from African swine fever virus (isolate Tick/Malawi/Lil 20-1/1983) (ASFV).